Reading from the N-terminus, the 435-residue chain is Mitochondrial distribution and morphology protein 12 (435 aa).

In terms of domain architecture, SMP-LTD spans 1–435; sequence MSIEVDWGAA…VYPSFWTFLV (435 aa). Disordered regions lie at residues 73–113 and 186–268; these read DEDD…AINH and WNDS…TSEE. Residues 96–113 are compositionally biased toward basic and acidic residues; the sequence is THPELNESSFRDDNAINH. Residues 218–238 show a composition bias toward low complexity; it reads SSNPTSRPSTSSTLPSHPSGS. A compositionally biased stretch (basic and acidic residues) spans 251 to 268; that stretch reads HGSHPEEHGHLDDPTSEE.

This sequence belongs to the MDM12 family. As to quaternary structure, component of the ER-mitochondria encounter structure (ERMES) or MDM complex, composed of mmm1, mdm10, mdm12 and mdm34. A mmm1 homodimer associates with one molecule of mdm12 on each side in a pairwise head-to-tail manner, and the SMP-LTD domains of mmm1 and mdm12 generate a continuous hydrophobic tunnel for phospholipid trafficking.

Its subcellular location is the mitochondrion outer membrane. The protein localises to the endoplasmic reticulum membrane. Component of the ERMES/MDM complex, which serves as a molecular tether to connect the endoplasmic reticulum (ER) and mitochondria. Components of this complex are involved in the control of mitochondrial shape and protein biogenesis, and function in nonvesicular lipid trafficking between the ER and mitochondria. Mdm12 is required for the interaction of the ER-resident membrane protein mmm1 and the outer mitochondrial membrane-resident beta-barrel protein mdm10. The mdm12-mmm1 subcomplex functions in the major beta-barrel assembly pathway that is responsible for biogenesis of all mitochondrial outer membrane beta-barrel proteins, and acts in a late step after the SAM complex. The mdm10-mdm12-mmm1 subcomplex further acts in the TOM40-specific pathway after the action of the mdm12-mmm1 complex. Essential for establishing and maintaining the structure of mitochondria and maintenance of mtDNA nucleoids. This Aspergillus niger (strain ATCC MYA-4892 / CBS 513.88 / FGSC A1513) protein is Mitochondrial distribution and morphology protein 12.